We begin with the raw amino-acid sequence, 106 residues long: UPF0145 protein AZOSEA16190 (106 aa).

This sequence belongs to the UPF0145 family.

In Aromatoleum aromaticum (strain DSM 19018 / LMG 30748 / EbN1) (Azoarcus sp. (strain EbN1)), this protein is UPF0145 protein AZOSEA16190.